The primary structure comprises 453 residues: Dihydrolipoyllysine-residue succinyltransferase component of 2-oxoglutarate dehydrogenase complex, mitochondrial (453 aa).

A mitochondrion-targeting transit peptide spans 1–67 (MLSRSRCVSR…RFFRTTAVCK (67 aa)). One can recognise a Lipoyl-binding domain in the interval 70–144 (LVTVKTPAFA…EGGTPLFTLR (75 aa)). Residue Ser81 is modified to Phosphoserine. Residue Lys110 is modified to N6-lipoyllysine. The span at 152-172 (KAKPAEAPAAAAPKAEPTAAA) shows a compositional bias: low complexity. The segment at 152–225 (KAKPAEAPAA…GKGLRSEHRE (74 aa)) is disordered. Lys154 is subject to N6-acetyllysine. A compositionally biased stretch (pro residues) spans 173 to 196 (VPPPAAPIPTQMPPVPSPSQPPSG). N6-acetyllysine is present on residues Lys267, Lys272, Lys273, Lys277, and Lys307. Residues His424 and Asp428 contribute to the active site.

It belongs to the 2-oxoacid dehydrogenase family. As to quaternary structure, the 2-oxoglutarate dehydrogenase complex is composed of OGDH (2-oxoglutarate dehydrogenase; E1), DLST (dihydrolipoamide succinyltransferase; E2), DLD (dihydrolipoamide dehydrogenase; E3) and the assembly factor KGD4. It contains multiple copies of the three enzymatic components (E1, E2 and E3). In the nucleus, the 2-oxoglutarate dehydrogenase complex associates with KAT2A. Interacts with ABHD11; this interaction maintains the functional lipoylation of the 2-oxoglutarate dehydrogenase complex. Requires (R)-lipoate as cofactor.

The protein resides in the mitochondrion matrix. The protein localises to the nucleus. It catalyses the reaction N(6)-[(R)-dihydrolipoyl]-L-lysyl-[protein] + succinyl-CoA = N(6)-[(R)-S(8)-succinyldihydrolipoyl]-L-lysyl-[protein] + CoA. It participates in amino-acid degradation; L-lysine degradation via saccharopine pathway; glutaryl-CoA from L-lysine: step 6/6. It functions in the pathway carbohydrate metabolism; tricarboxylic acid cycle. In terms of biological role, dihydrolipoamide succinyltransferase (E2) component of the 2-oxoglutarate dehydrogenase complex. The 2-oxoglutarate dehydrogenase complex catalyzes the overall conversion of 2-oxoglutarate to succinyl-CoA and CO(2). The 2-oxoglutarate dehydrogenase complex is mainly active in the mitochondrion. A fraction of the 2-oxoglutarate dehydrogenase complex also localizes in the nucleus and is required for lysine succinylation of histones: associates with KAT2A on chromatin and provides succinyl-CoA to histone succinyltransferase KAT2A. The polypeptide is Dihydrolipoyllysine-residue succinyltransferase component of 2-oxoglutarate dehydrogenase complex, mitochondrial (Homo sapiens (Human)).